The following is a 405-amino-acid chain: Magnesium-protoporphyrin IX monomethyl ester [oxidative] cyclase, chloroplastic (405 aa).

The N-terminal 43 residues, 1 to 43, are a transit peptide targeting the chloroplast; sequence MATEMALVKPISKFSTSSPIFSNSRYGKFTTVRMSSTSQSTTK.

The protein belongs to the AcsF family. Requires Fe cation as cofactor.

It localises to the plastid. It is found in the chloroplast. The enzyme catalyses Mg-protoporphyrin IX 13-monomethyl ester + 3 NADPH + 3 O2 + 2 H(+) = 3,8-divinyl protochlorophyllide a + 3 NADP(+) + 5 H2O. It functions in the pathway porphyrin-containing compound metabolism; chlorophyll biosynthesis. Catalyzes the formation of the isocyclic ring in chlorophyll biosynthesis. Mediates the cyclase reaction, which results in the formation of divinylprotochlorophyllide (Pchlide) characteristic of all chlorophylls from magnesium-protoporphyrin IX 13-monomethyl ester (MgPMME). In Gossypium hirsutum (Upland cotton), this protein is Magnesium-protoporphyrin IX monomethyl ester [oxidative] cyclase, chloroplastic (CRD1).